The sequence spans 233 residues: MGQKVHPNGMRLGIIKKWNSVWFANTKDFADHLDSDYKVRQFLMKKLVKASVSRIIIERPAKSIRVTIYTARPGIVIGKKGEDVEKLRINIAKITGVPAQINISEVRKPELDAKLVSESITSQLERRVMFRRAMKRSVQNAMRQGAKGIKVEVSGRLGGAEIARREWYREGRVPLHTLRANIDYSISEAHTTYGVIGVKVWIFKGEILGGMSTIEKLEKSSIQIKKQHRKNRK.

One can recognise a KH type-2 domain in the interval 39–107; that stretch reads VRQFLMKKLV…PAQINISEVR (69 aa).

Belongs to the universal ribosomal protein uS3 family. As to quaternary structure, part of the 30S ribosomal subunit. Forms a tight complex with proteins S10 and S14.

Its function is as follows. Binds the lower part of the 30S subunit head. Binds mRNA in the 70S ribosome, positioning it for translation. In Buchnera aphidicola subsp. Schizaphis graminum (strain Sg), this protein is Small ribosomal subunit protein uS3.